The following is an 81-amino-acid chain: Cytochrome b559 subunit alpha (81 aa).

Residues 21-35 (VIHSITIPMLFIAGW) traverse the membrane as a helical segment. H23 provides a ligand contact to heme.

Belongs to the PsbE/PsbF family. Heterodimer of an alpha subunit and a beta subunit. PSII is composed of 1 copy each of membrane proteins PsbA, PsbB, PsbC, PsbD, PsbE, PsbF, PsbH, PsbI, PsbJ, PsbK, PsbL, PsbM, PsbT, PsbX, PsbY, PsbZ, Psb30/Ycf12, peripheral proteins PsbO, CyanoQ (PsbQ), PsbU, PsbV and a large number of cofactors. It forms dimeric complexes. The cofactor is heme b.

The protein localises to the cellular thylakoid membrane. This b-type cytochrome is tightly associated with the reaction center of photosystem II (PSII). PSII is a light-driven water:plastoquinone oxidoreductase that uses light energy to abstract electrons from H(2)O, generating O(2) and a proton gradient subsequently used for ATP formation. It consists of a core antenna complex that captures photons, and an electron transfer chain that converts photonic excitation into a charge separation. The protein is Cytochrome b559 subunit alpha of Rippkaea orientalis (strain PCC 8801 / RF-1) (Cyanothece sp. (strain PCC 8801)).